A 165-amino-acid polypeptide reads, in one-letter code: Small ribosomal subunit protein bS16 (165 aa).

A disordered region spans residues 84–165; it reads WTHGNNPEKG…EAPAEEAAEG (82 aa). A compositionally biased stretch (basic and acidic residues) spans 89–130; the sequence is NPEKGKPGKKAQERLAERAQREEERKQAEADAKAAAEAEKAA. Residues 131–157 show a composition bias toward low complexity; that stretch reads AAEAAAAAAAAPAVEEAPAEEAPAAEA.

Belongs to the bacterial ribosomal protein bS16 family.

This Caulobacter vibrioides (strain ATCC 19089 / CIP 103742 / CB 15) (Caulobacter crescentus) protein is Small ribosomal subunit protein bS16.